The following is a 226-amino-acid chain: Phosphoribosyl-dephospho-CoA transferase (226 aa).

Active-site residues include Asp148 and Asp150.

Belongs to the MdcG family.

It carries out the reaction apo-[malonate decarboxylase ACP] + 2'-(5''-triphospho-alpha-D-ribosyl)-3'-dephospho-CoA = holo-[malonate decarboxylase ACP] + diphosphate. Transfers 2'-(5-triphosphoribosyl)-3'-dephosphocoenzyme-A to the apo-[acyl-carrier-protein] of the malonate decarboxylase to yield holo-[acyl-carrier-protein]. This chain is Phosphoribosyl-dephospho-CoA transferase, found in Bradyrhizobium diazoefficiens (strain JCM 10833 / BCRC 13528 / IAM 13628 / NBRC 14792 / USDA 110).